A 298-amino-acid chain; its full sequence is Inosose dehydratase (298 aa).

This sequence belongs to the IolE/MocC family. Requires glutathione as cofactor. It depends on Co(2+) as a cofactor. The cofactor is Mn(2+).

The enzyme catalyses scyllo-inosose = 3D-3,5/4-trihydroxycyclohexane-1,2-dione + H2O. In terms of biological role, catalyzes the dehydration of inosose (2-keto-myo-inositol, 2KMI or 2,4,6/3,5-pentahydroxycyclohexanone) to 3D-(3,5/4)-trihydroxycyclohexane-1,2-dione (D-2,3-diketo-4-deoxy-epi-inositol). The sequence is that of Inosose dehydratase from Glaesserella parasuis serovar 5 (strain SH0165) (Haemophilus parasuis).